A 660-amino-acid polypeptide reads, in one-letter code: Polyadenylate-binding protein 3 (660 aa).

RRM domains follow at residues 49 to 126 (SSLY…LSNR), 136 to 213 (GNIF…HFIR), 229 to 306 (TNVY…RAQK), and 332 to 409 (ANLY…LAQR). Residues 571-648 (PISKLTSSLA…ALDVLRLSVD (78 aa)) form the PABC domain.

Belongs to the polyadenylate-binding protein type-1 family. In terms of tissue distribution, expressed predominantly in immature flowers. Detected in tapetum and pollen. Strongly expressed in immatures siliques.

The protein resides in the cytoplasm. The protein localises to the nucleus. Functionally, binds the poly(A) tail of mRNA. Appears to be an important mediator of the multiple roles of the poly(A) tail in mRNA biogenesis, stability and translation. In the cytoplasm, affects both translation and mRNA decay. Inhibits the polyadenylated RNA degradation by the Rrp41p 3'--&gt;5' exonuclease in vitro. Binds with the 5'UTRs of PAB2, PAB3 and with a lower affinity with the 5'UTR of PAB5. The protein is Polyadenylate-binding protein 3 (PAB3) of Arabidopsis thaliana (Mouse-ear cress).